We begin with the raw amino-acid sequence, 304 residues long: Large ribosomal subunit protein uL18 (304 aa).

The interval 285 to 304 is disordered; it reads LNALNSSAGADDDDEEEDDE. A compositionally biased stretch (acidic residues) spans 294-304; sequence ADDDDEEEDDE.

The protein belongs to the universal ribosomal protein uL18 family. As to quaternary structure, component of the large ribosomal subunit (LSU).

The protein resides in the cytoplasm. It is found in the nucleus. In terms of biological role, component of the ribosome, a large ribonucleoprotein complex responsible for the synthesis of proteins in the cell. The small ribosomal subunit (SSU) binds messenger RNAs (mRNAs) and translates the encoded message by selecting cognate aminoacyl-transfer RNA (tRNA) molecules. The large subunit (LSU) contains the ribosomal catalytic site termed the peptidyl transferase center (PTC), which catalyzes the formation of peptide bonds, thereby polymerizing the amino acids delivered by tRNAs into a polypeptide chain. The nascent polypeptides leave the ribosome through a tunnel in the LSU and interact with protein factors that function in enzymatic processing, targeting, and the membrane insertion of nascent chains at the exit of the ribosomal tunnel. The sequence is that of Large ribosomal subunit protein uL18 (RPL5A) from Oryza sativa subsp. indica (Rice).